Here is a 186-residue protein sequence, read N- to C-terminus: Periplasmic nitrate reductase, electron transfer subunit (186 aa).

A signal peptide spans 1–20 (MKTSKLNFLTLVASTGLALA). Residues H87, C102, C105, H106, H123, C144, C147, and H148 each contribute to the heme c site.

It belongs to the NapB family. Component of the periplasmic nitrate reductase NapAB complex composed of NapA and NapB. Post-translationally, binds 2 heme C groups per subunit.

The protein localises to the periplasm. Electron transfer subunit of the periplasmic nitrate reductase complex NapAB. Transfers electrons to NapA subunit, thus allowing electron flow between membrane and periplasm. Essential for periplasmic nitrate reduction with nitrate as the terminal electron acceptor. The chain is Periplasmic nitrate reductase, electron transfer subunit from Wolinella succinogenes (strain ATCC 29543 / DSM 1740 / CCUG 13145 / JCM 31913 / LMG 7466 / NCTC 11488 / FDC 602W) (Vibrio succinogenes).